Reading from the N-terminus, the 328-residue chain is tRNA methyltransferase 10 homolog A (328 aa).

Disordered regions lie at residues Met1–Val91 and His281–Gln328. Position 22 is a phosphoserine (Ser22). The stretch at Arg43–Ser83 forms a coiled coil. The segment covering Lys52–Lys62 has biased composition (basic and acidic residues). Basic residues predominate over residues Glu63–Glu75. The SAM-dependent MTase TRM10-type domain occupies Arg88 to Val278. Residues Glu305 to Gln319 show a composition bias toward basic and acidic residues.

Belongs to the class IV-like SAM-binding methyltransferase superfamily. TRM10 family. In terms of assembly, interacts with tRNA.

The protein localises to the nucleus. It localises to the nucleolus. The enzyme catalyses guanosine(9) in tRNA + S-adenosyl-L-methionine = N(1)-methylguanosine(9) in tRNA + S-adenosyl-L-homocysteine + H(+). S-adenosyl-L-methionine-dependent guanine N(1)-methyltransferase that catalyzes the formation of N(1)-methylguanine at position 9 (m1G9) in tRNAs. Probably not able to catalyze formation of N(1)-methyladenine at position 9 (m1A9) in tRNAs. The sequence is that of tRNA methyltransferase 10 homolog A (Trmt10a) from Mus musculus (Mouse).